The chain runs to 824 residues: Leucine--tRNA ligase (824 aa).

The 'HIGH' region signature appears at 41–51 (PYPSGTLHVGH). The 'KMSKS' region motif lies at 580 to 584 (KMSKS). Residue lysine 583 participates in ATP binding.

The protein belongs to the class-I aminoacyl-tRNA synthetase family.

The protein resides in the cytoplasm. It carries out the reaction tRNA(Leu) + L-leucine + ATP = L-leucyl-tRNA(Leu) + AMP + diphosphate. The chain is Leucine--tRNA ligase from Thermotoga petrophila (strain ATCC BAA-488 / DSM 13995 / JCM 10881 / RKU-1).